Here is a 278-residue protein sequence, read N- to C-terminus: Ribosomal RNA small subunit methyltransferase A (278 aa).

The S-adenosyl-L-methionine site is built by Asn-18, Leu-20, Gly-45, Glu-66, Asp-89, and Asn-110.

It belongs to the class I-like SAM-binding methyltransferase superfamily. rRNA adenine N(6)-methyltransferase family. RsmA subfamily.

The protein resides in the cytoplasm. The enzyme catalyses adenosine(1518)/adenosine(1519) in 16S rRNA + 4 S-adenosyl-L-methionine = N(6)-dimethyladenosine(1518)/N(6)-dimethyladenosine(1519) in 16S rRNA + 4 S-adenosyl-L-homocysteine + 4 H(+). In terms of biological role, specifically dimethylates two adjacent adenosines (A1518 and A1519) in the loop of a conserved hairpin near the 3'-end of 16S rRNA in the 30S particle. May play a critical role in biogenesis of 30S subunits. The sequence is that of Ribosomal RNA small subunit methyltransferase A from Cupriavidus pinatubonensis (strain JMP 134 / LMG 1197) (Cupriavidus necator (strain JMP 134)).